The primary structure comprises 160 residues: ATP synthase subunit delta, mitochondrial (160 aa).

The transit peptide at M1–Y22 directs the protein to the mitochondrion.

F-type ATP synthases have 2 components, the catalytic core F(1) and the membrane-embedded component F(0), linked together by a central stalk and a peripheral stalk. The central stalk, also called rotor shaft, is often seen as part of F(1). The peripheral stalk is seen as part of F(0). F(0) contains the membrane channel next to the rotor. F-type ATP synthases form dimers but each monomer functions independently in ATP generation. The dimer consists of 18 different polypeptides: ATP1 (subunit alpha, part of F(1), 3 molecules per monomer), ATP2 (subunit beta, part of F(1), 3 molecules per monomer), ATP3 (subunit gamma, part of the central stalk), ATP4 (subunit b, part of the peripheral stalk), ATP5/OSCP (subunit 5/OSCP, part of the peripheral stalk), ATP6 (subunit a, part of the peripheral stalk), ATP7 (subunit d, part of the peripheral stalk), ATP8 (subunit 8, part of the peripheral stalk), OLI1 (subunit c, part of the rotor, 10 molecules per monomer), ATP14 (subunit h, part of the peripheral stalk), ATP15 (subunit epsilon, part of the central stalk), ATP16 (subunit delta, part of the central stalk), ATP17 (subunit f, part of the peripheral stalk), ATP18 (subunit i/j, part of the peripheral stalk). Dimer-specific subunits are ATP19 (subunit k, at interface between monomers), ATP20 (subunit g, at interface between monomers), TIM11 (subunit e, at interface between monomers). Also contains subunit L.

The protein resides in the mitochondrion inner membrane. Its function is as follows. Mitochondrial membrane ATP synthase (F(1)F(0) ATP synthase or Complex V) produces ATP from ADP in the presence of a proton gradient across the membrane which is generated by electron transport complexes of the respiratory chain. F-type ATP synthases consist of two structural domains, F(1) - containing the extramembraneous catalytic core, and F(0) - containing the membrane proton channel, linked together by a central stalk and a peripheral stalk. During catalysis, ATP synthesis in the catalytic domain of F(1) is coupled via a rotary mechanism of the central stalk subunits to proton translocation. Part of the complex F(1) domain and the central stalk which is part of the complex rotary element. Rotation of the central stalk against the surrounding alpha/ATP1(3)beta/ATP2(3) subunits leads to hydrolysis of ATP in three separate catalytic sites on the beta/ATP2 subunits. In Pichia angusta (Yeast), this protein is ATP synthase subunit delta, mitochondrial.